Consider the following 290-residue polypeptide: ATP synthase gamma chain (290 aa).

The protein belongs to the ATPase gamma chain family. In terms of assembly, F-type ATPases have 2 components, CF(1) - the catalytic core - and CF(0) - the membrane proton channel. CF(1) has five subunits: alpha(3), beta(3), gamma(1), delta(1), epsilon(1). CF(0) has three main subunits: a, b and c.

It is found in the cell membrane. Its function is as follows. Produces ATP from ADP in the presence of a proton gradient across the membrane. The gamma chain is believed to be important in regulating ATPase activity and the flow of protons through the CF(0) complex. This chain is ATP synthase gamma chain, found in Listeria innocua serovar 6a (strain ATCC BAA-680 / CLIP 11262).